Here is a 701-residue protein sequence, read N- to C-terminus: T-cell immunomodulatory protein homolog (701 aa).

The N-terminal stretch at 1-29 (MVKCGKYVLILELLLLTLLYNLIKRVSNS) is a signal peptide. The Extracellular segment spans residues 30 to 657 (GETVSSFVDG…IQLSVNPSNK (628 aa)). N-linked (GlcNAc...) asparagine glycans are attached at residues asparagine 148, asparagine 180, asparagine 217, asparagine 258, asparagine 458, asparagine 522, and asparagine 571. The chain crosses the membrane as a helical span at residues 658–678 (FYSIIYITLICLSVIGVLIFI). Over 679–701 (LDRKEKIEDSKEEMGFKSHFVIG) the chain is Cytoplasmic.

The protein belongs to the TIP family.

The protein resides in the membrane. Functionally, may protect the parasite against attack by the host immune system by immunomodulation. This Plasmodium yoelii yoelii protein is T-cell immunomodulatory protein homolog.